The chain runs to 404 residues: Synaptic vesicle membrane protein VAT-1 homolog (404 aa).

The segment at 1–55 (MSAEREATEAATVAAAAEARAETGAGEGAPSQPPTVEVASDPQPPPAPEASASAS) is disordered. N-acetylserine is present on S2. The residue at position 2 (S2) is a Phosphoserine. A compositionally biased stretch (low complexity) spans 9 to 24 (EAATVAAAAEARAETG). S31 and S40 each carry phosphoserine.

The protein belongs to the zinc-containing alcohol dehydrogenase family. Quinone oxidoreductase subfamily. In terms of assembly, interacts with MFN1 and MFN2. Ubiquitously expressed.

It is found in the cytoplasm. The protein localises to the mitochondrion outer membrane. Functionally, plays a part in calcium-regulated keratinocyte activation in epidermal repair mechanisms. Has no effect on cell proliferation. Possesses ATPase activity. May negatively regulate mitochondrial fusion. The chain is Synaptic vesicle membrane protein VAT-1 homolog (Vat1) from Rattus norvegicus (Rat).